A 431-amino-acid polypeptide reads, in one-letter code: Putative malic acid transport protein (431 aa).

10 helical membrane-spanning segments follow: residues 30-50 (FTWA…VTSL), 62-82 (GKII…CITF), 101-121 (VLFM…LYPY), 136-156 (ILYW…FYSL), 167-187 (IIPA…IASA), 201-221 (VVAG…VYAV), 239-259 (GMFI…DLAF), 284-304 (FMAL…FVSV), 318-338 (VSWF…QELG), and 346-366 (VCIV…ILIL). A compositionally biased stretch (basic and acidic residues) spans 402–424 (EEEKDEAERSKRKAEESDGKTTR). The interval 402-431 (EEEKDEAERSKRKAEESDGKTTRELTSGGL) is disordered.

The protein belongs to the tellurite-resistance/dicarboxylate transporter (TDT) family.

Its subcellular location is the membrane. The polypeptide is Putative malic acid transport protein (Schizosaccharomyces pombe (strain 972 / ATCC 24843) (Fission yeast)).